A 935-amino-acid polypeptide reads, in one-letter code: MDKIIIQGARENNLKNIFLEIPKNQFVVFTGLSGSGKSTLAFDTLYAEGQRRYLESLSSYARQFLDKVGKPNVDKIEGLTPAIAIDQKTTSKNPRSTVGTITEIYDYLRLLFARVGEQFCPTCLEPISSMSTSDIISQICHLEENSKIIILAPIIKDKKGSFNDKLESLRLKGYVRAFVDGVMVRLDEEIHLHKTKKHTIEAVVDRVVVNNENASRIASAIEKALKESYGELEVEILQDNAPSIRKHYSEHKACFKCKMSFEELEPLSFSFNSPKGACESCLGLGTKFSLDISKILDPNTPLNQGAIKVIFGYNRSYYAQMFEGFCEYNGIDSALCFNELNKEQQDALLYGNGTEISFHFKNSPLKRPWKGIIQIAYDMFKEQKDLSDYMSEKTCSSCEGHRLKASSLSVQVAGLKMADFLTKPIEEVYHFFNDPTHFSYLNEQEKKIAEPILKEILERVFFLYDVGLGYLTLGRDARTISGGESQRIRIASQIGSGLTGVLYVLDEPSIGLHEKDTLKLINTLRNLQKKGNTLIVVEHDKETIKHADFVVDIGPKAGRHGGEVVFSGSVKELLQNNHSTALYLNGTKKIERPKFELPKEKHFLEIKNVNINNIKNLSVQIPLKQLVCITGVSGSGKSSLILQTLLPTAQTLLNHAKKTQSLNGVEIVGLEHLDKVIYLDQAPIGKTPRSNPATYTGVMDEIRILFAEQKEAKILGYSASRFSFNVKGGRCEKCQGDGDIKIEMHFLPDVLVQCDSCKGAKYNPQTLEIKVKGKSIADVLNMSVEEAYEFFAKFPKIAVKLKTLMDVGLGYITLGQNATTLSGGEAQRIKLAKELSKKDTGKTLYILDEPTTGLHFEDVNHLLQVLHSLVALGNSMLVIEHNLDIIKNADYIIDMGPDGGDKGGKVIASGTPLEVAQNCEKTQSYTGKFLALELK.

31–38 (GLSGSGKS) contributes to the ATP binding site. Residues 254–281 (CFKCKMSFEELEPLSFSFNSPKGACESC) form a C4-type zinc finger. ABC transporter domains lie at 310–579 (IFGY…NNHS) and 599–931 (KEKH…KFLA). 631–638 (GVSGSGKS) contributes to the ATP binding site. A C4-type zinc finger spans residues 731-757 (CEKCQGDGDIKIEMHFLPDVLVQCDSC).

The protein belongs to the ABC transporter superfamily. UvrA family. As to quaternary structure, forms a heterotetramer with UvrB during the search for lesions.

The protein localises to the cytoplasm. Its function is as follows. The UvrABC repair system catalyzes the recognition and processing of DNA lesions. UvrA is an ATPase and a DNA-binding protein. A damage recognition complex composed of 2 UvrA and 2 UvrB subunits scans DNA for abnormalities. When the presence of a lesion has been verified by UvrB, the UvrA molecules dissociate. In Helicobacter pylori (strain ATCC 700392 / 26695) (Campylobacter pylori), this protein is UvrABC system protein A.